A 361-amino-acid chain; its full sequence is Chorismate synthase (361 aa).

NADP(+) is bound by residues arginine 48 and arginine 54. FMN contacts are provided by residues 125 to 127 (RSS), 238 to 239 (NA), glycine 278, 293 to 297 (KPTSS), and arginine 319.

The protein belongs to the chorismate synthase family. As to quaternary structure, homotetramer. It depends on FMNH2 as a cofactor.

The enzyme catalyses 5-O-(1-carboxyvinyl)-3-phosphoshikimate = chorismate + phosphate. It functions in the pathway metabolic intermediate biosynthesis; chorismate biosynthesis; chorismate from D-erythrose 4-phosphate and phosphoenolpyruvate: step 7/7. In terms of biological role, catalyzes the anti-1,4-elimination of the C-3 phosphate and the C-6 proR hydrogen from 5-enolpyruvylshikimate-3-phosphate (EPSP) to yield chorismate, which is the branch point compound that serves as the starting substrate for the three terminal pathways of aromatic amino acid biosynthesis. This reaction introduces a second double bond into the aromatic ring system. This is Chorismate synthase from Shigella flexneri serotype 5b (strain 8401).